Consider the following 323-residue polypeptide: Flavone synthase cfoJ (323 aa).

FMN is required as a cofactor.

It functions in the pathway secondary metabolite biosynthesis; flavonoid biosynthesis. In terms of biological role, FMN-dependent oxidoreductase; part of the gene cluster that mediates the biosynthesis of chlorflavonin, a fungal flavonoid with acetolactate synthase inhibitory activity. Within the pathway, cfoJ acts as a flavone synthase (FNS) and catalyzes the formation of a double bond between C2 and C3, converting the flavanone into a flavone. The pathway begins with the PKS-NRPS hybrid synthetase cfoA that uses benzoic acid or p-hydroxybenzoic acid as a starter unit with four rounds of chain elongation using malonyl-CoA to form the chalcone skeleton. Then, a new type of chalcone isomerase, cfoK, catalyzes the conversion of the chalcone into a flavanone by a histidine-mediated oxa-Michael addition mechanism. The desaturation of flavanone to flavone is catalyzed by a new type of flavone synthase, the flavin mononucleotide (FMN)-dependent oxidoreductase cfoJ. Monooxygenases cfoF, cfoG, and P450 cfoH are responsible for the hydroxylation of the flavonoid skeleton at sites C3, C8, and C2', respectively. Like cfoF, the dehydratase cfoI plays also a role in the hydroxylation of position C3. Methyltransferases cfoB, cfoC, and cfoD then catalyze the methylation of C7-OH, C8-OH, and C3-OH, respectively. Finally, the monooxygenase cfoE is responsible for the chlorination of flavonoid at position C3'. The protein is Flavone synthase cfoJ of Aspergillus candidus.